Consider the following 289-residue polypeptide: tRNA pseudouridine synthase B (289 aa).

The active-site Nucleophile is D38.

It belongs to the pseudouridine synthase TruB family. Type 1 subfamily.

It catalyses the reaction uridine(55) in tRNA = pseudouridine(55) in tRNA. Functionally, responsible for synthesis of pseudouridine from uracil-55 in the psi GC loop of transfer RNAs. This chain is tRNA pseudouridine synthase B, found in Clostridium acetobutylicum (strain ATCC 824 / DSM 792 / JCM 1419 / IAM 19013 / LMG 5710 / NBRC 13948 / NRRL B-527 / VKM B-1787 / 2291 / W).